We begin with the raw amino-acid sequence, 367 residues long: tRNA/tmRNA (uracil-C(5))-methyltransferase (367 aa).

Residues Gln190, Tyr218, Asn223, Glu239, and Asp299 each contribute to the S-adenosyl-L-methionine site. The Nucleophile role is filled by Cys324. Residue Glu358 is the Proton acceptor of the active site.

It belongs to the class I-like SAM-binding methyltransferase superfamily. RNA M5U methyltransferase family. TrmA subfamily.

The enzyme catalyses uridine(54) in tRNA + S-adenosyl-L-methionine = 5-methyluridine(54) in tRNA + S-adenosyl-L-homocysteine + H(+). It carries out the reaction uridine(341) in tmRNA + S-adenosyl-L-methionine = 5-methyluridine(341) in tmRNA + S-adenosyl-L-homocysteine + H(+). In terms of biological role, dual-specificity methyltransferase that catalyzes the formation of 5-methyluridine at position 54 (m5U54) in all tRNAs, and that of position 341 (m5U341) in tmRNA (transfer-mRNA). In Dickeya chrysanthemi (strain Ech1591) (Dickeya zeae (strain Ech1591)), this protein is tRNA/tmRNA (uracil-C(5))-methyltransferase.